The sequence spans 222 residues: 7-cyano-7-deazaguanine synthase (222 aa).

7-17 (LSGGLDSSTVL) is a binding site for ATP. Residues Cys191, Cys199, Cys202, and Cys205 each coordinate Zn(2+).

It belongs to the QueC family. It depends on Zn(2+) as a cofactor.

The catalysed reaction is 7-carboxy-7-deazaguanine + NH4(+) + ATP = 7-cyano-7-deazaguanine + ADP + phosphate + H2O + H(+). Its pathway is purine metabolism; 7-cyano-7-deazaguanine biosynthesis. Functionally, catalyzes the ATP-dependent conversion of 7-carboxy-7-deazaguanine (CDG) to 7-cyano-7-deazaguanine (preQ(0)). The protein is 7-cyano-7-deazaguanine synthase of Trichodesmium erythraeum (strain IMS101).